The following is a 290-amino-acid chain: 4-hydroxy-tetrahydrodipicolinate synthase (290 aa).

Position 42 (threonine 42) interacts with pyruvate. The active-site Proton donor/acceptor is tyrosine 129. Catalysis depends on lysine 157, which acts as the Schiff-base intermediate with substrate. Isoleucine 198 contacts pyruvate.

Belongs to the DapA family. In terms of assembly, homotetramer; dimer of dimers.

It localises to the cytoplasm. It carries out the reaction L-aspartate 4-semialdehyde + pyruvate = (2S,4S)-4-hydroxy-2,3,4,5-tetrahydrodipicolinate + H2O + H(+). The protein operates within amino-acid biosynthesis; L-lysine biosynthesis via DAP pathway; (S)-tetrahydrodipicolinate from L-aspartate: step 3/4. Catalyzes the condensation of (S)-aspartate-beta-semialdehyde [(S)-ASA] and pyruvate to 4-hydroxy-tetrahydrodipicolinate (HTPA). This Chlamydia felis (strain Fe/C-56) (Chlamydophila felis) protein is 4-hydroxy-tetrahydrodipicolinate synthase.